Reading from the N-terminus, the 430-residue chain is Enolase (430 aa).

Position 163 (Q163) interacts with (2R)-2-phosphoglycerate. The Proton donor role is filled by E205. D242, E287, and D314 together coordinate Mg(2+). (2R)-2-phosphoglycerate-binding residues include K339, R368, S369, and K390. The Proton acceptor role is filled by K339.

Belongs to the enolase family. Mg(2+) serves as cofactor.

It localises to the cytoplasm. The protein localises to the secreted. It is found in the cell surface. It catalyses the reaction (2R)-2-phosphoglycerate = phosphoenolpyruvate + H2O. Its pathway is carbohydrate degradation; glycolysis; pyruvate from D-glyceraldehyde 3-phosphate: step 4/5. Its function is as follows. Catalyzes the reversible conversion of 2-phosphoglycerate (2-PG) into phosphoenolpyruvate (PEP). It is essential for the degradation of carbohydrates via glycolysis. The chain is Enolase from Geobacillus kaustophilus (strain HTA426).